The primary structure comprises 746 residues: Ferric enterobactin receptor (746 aa).

The N-terminal stretch at 1–25 (MSSRALPAVPFLLLSSCLLANAVHA) is a signal peptide. Positions 39 to 44 (QTVVAT) match the TonB box motif. The region spanning 47–174 (EETKQAPGVS…AGGVVNIITK (128 aa)) is the TBDR plug domain. Disordered regions lie at residues 82–102 (VNLTGNSSSGQRGNNRQIDIR), 235–254 (GHESNRTGKQAGTLPAGREG), and 397–424 (QKLDDPSSNTQNTEEGGSIPGLAGKNRS). A compositionally biased stretch (polar residues) spans 84 to 98 (LTGNSSSGQRGNNRQ). In terms of domain architecture, TBDR beta-barrel spans 179–746 (ETHGNLSVYS…TFYTSLTASF (568 aa)). Residues 402–411 (PSSNTQNTEE) are compositionally biased toward polar residues. Positions 729–746 (ATYNEPGRTFYTSLTASF) match the TonB C-terminal box motif.

It belongs to the TonB-dependent receptor family.

It localises to the cell outer membrane. Functionally, specific receptor for the siderophore ferric enterobactin. In Pseudomonas aeruginosa (strain ATCC 15692 / DSM 22644 / CIP 104116 / JCM 14847 / LMG 12228 / 1C / PRS 101 / PAO1), this protein is Ferric enterobactin receptor (pfeA).